Reading from the N-terminus, the 169-residue chain is S-ribosylhomocysteine lyase (169 aa).

The Fe cation site is built by His54, His58, and Cys128.

Belongs to the LuxS family. As to quaternary structure, homodimer. It depends on Fe cation as a cofactor.

The enzyme catalyses S-(5-deoxy-D-ribos-5-yl)-L-homocysteine = (S)-4,5-dihydroxypentane-2,3-dione + L-homocysteine. Functionally, involved in the synthesis of autoinducer 2 (AI-2) which is secreted by bacteria and is used to communicate both the cell density and the metabolic potential of the environment. The regulation of gene expression in response to changes in cell density is called quorum sensing. Catalyzes the transformation of S-ribosylhomocysteine (RHC) to homocysteine (HC) and 4,5-dihydroxy-2,3-pentadione (DPD). In Tolumonas auensis (strain DSM 9187 / NBRC 110442 / TA 4), this protein is S-ribosylhomocysteine lyase.